Reading from the N-terminus, the 397-residue chain is Ubiquitin-like modifier-activating enzyme 5 (397 aa).

The ATP site is built by Gly-77, Asp-98, Lys-121, Asn-144, and Asn-178. The Zn(2+) site is built by Cys-220 and Cys-223. The active-site Glycyl thioester intermediate is Cys-244. Cys-297 and Cys-302 together coordinate Zn(2+).

It belongs to the ubiquitin-activating E1 family. UBA5 subfamily.

Functionally, E1-like enzyme which activates UFM1. The polypeptide is Ubiquitin-like modifier-activating enzyme 5 (Culex quinquefasciatus (Southern house mosquito)).